Here is a 438-residue protein sequence, read N- to C-terminus: UDP-N-acetylmuramoylalanine--D-glutamate ligase (438 aa).

112-118 (GSNGKST) contacts ATP.

This sequence belongs to the MurCDEF family. It depends on Mg(2+) as a cofactor.

It localises to the cytoplasm. The enzyme catalyses UDP-N-acetyl-alpha-D-muramoyl-L-alanine + D-glutamate + ATP = UDP-N-acetyl-alpha-D-muramoyl-L-alanyl-D-glutamate + ADP + phosphate + H(+). It functions in the pathway cell wall biogenesis; peptidoglycan biosynthesis. Functionally, cell wall formation. Catalyzes the addition of glutamate to the nucleotide precursor UDP-N-acetylmuramoyl-L-alanine (UMA). In Escherichia coli (strain K12), this protein is UDP-N-acetylmuramoylalanine--D-glutamate ligase (murD).